Reading from the N-terminus, the 189-residue chain is MKTLAPSYLKHQFLIAMPHMADPNFAQTLTYIVEHNANGAMGLVVNRPQELNLADILEQLRPDEEPPASTLQVPIYQGGPVQTDRGFVLHSSECSYQATVELQGLSLSTSQDVLFAIAEGVGPQKSLITLGYAGWEAGQLEAELADNAWLNCPFDPDIIFGLASEQRLGAAAASLGINLSLLTSQAGHA.

Belongs to the UPF0301 (AlgH) family.

This Pseudomonas putida (strain W619) protein is UPF0301 protein PputW619_0469.